The sequence spans 360 residues: Peptide chain release factor 1 (360 aa).

Glutamine 237 carries the post-translational modification N5-methylglutamine.

The protein belongs to the prokaryotic/mitochondrial release factor family. Methylated by PrmC. Methylation increases the termination efficiency of RF1.

It is found in the cytoplasm. Peptide chain release factor 1 directs the termination of translation in response to the peptide chain termination codons UAG and UAA. The protein is Peptide chain release factor 1 of Pseudomonas syringae pv. syringae (strain B728a).